We begin with the raw amino-acid sequence, 612 residues long: 1-deoxy-D-xylulose-5-phosphate synthase (612 aa).

Residues His-77 and 118–120 contribute to the thiamine diphosphate site; that span reads GHS. Residue Asp-147 participates in Mg(2+) binding. Residues 148–149, Asn-176, Tyr-288, and Glu-365 contribute to the thiamine diphosphate site; that span reads AA. Asn-176 is a Mg(2+) binding site.

This sequence belongs to the transketolase family. DXPS subfamily. As to quaternary structure, homodimer. The cofactor is Mg(2+). Thiamine diphosphate is required as a cofactor.

The enzyme catalyses D-glyceraldehyde 3-phosphate + pyruvate + H(+) = 1-deoxy-D-xylulose 5-phosphate + CO2. It functions in the pathway metabolic intermediate biosynthesis; 1-deoxy-D-xylulose 5-phosphate biosynthesis; 1-deoxy-D-xylulose 5-phosphate from D-glyceraldehyde 3-phosphate and pyruvate: step 1/1. In terms of biological role, catalyzes the acyloin condensation reaction between C atoms 2 and 3 of pyruvate and glyceraldehyde 3-phosphate to yield 1-deoxy-D-xylulose-5-phosphate (DXP). This chain is 1-deoxy-D-xylulose-5-phosphate synthase, found in Malacoplasma penetrans (strain HF-2) (Mycoplasma penetrans).